A 662-amino-acid chain; its full sequence is Glycogen debranching enzyme (662 aa).

Asp-338 acts as the Nucleophile in catalysis. The active-site Proton donor is the Glu-373.

Belongs to the glycosyl hydrolase 13 family.

It carries out the reaction Hydrolysis of (1-&gt;6)-alpha-D-glucosidic linkages to branches with degrees of polymerization of three or four glucose residues in limit dextrin.. It participates in glycan degradation; glycogen degradation. In terms of biological role, removes maltotriose and maltotetraose chains that are attached by 1,6-alpha-linkage to the limit dextrin main chain, generating a debranched limit dextrin. This Yersinia pestis bv. Antiqua (strain Angola) protein is Glycogen debranching enzyme.